The chain runs to 278 residues: Keratin-associated protein 5-1 (278 aa).

8 consecutive repeat copies span residues 42 to 45 (CCVP), 48 to 51 (CCKP), 130 to 133 (CCVP), 136 to 139 (CCKP), 142 to 145 (CCVP), 239 to 242 (CCKP), 258 to 261 (CCKP), and 268 to 271 (CCVP). The segment at 42 to 271 (CCVPVCCCKP…CCSQSSCCVP (230 aa)) is 8 X 4 AA repeats of C-C-X-P.

The protein belongs to the KRTAP type 5 family. In terms of assembly, interacts with hair keratins. Expressed in hair root but not in skin. Expressed also in lung, pancreas, ovary, testis.

Its function is as follows. In the hair cortex, hair keratin intermediate filaments are embedded in an interfilamentous matrix, consisting of hair keratin-associated protein (KRTAP), which are essential for the formation of a rigid and resistant hair shaft through their extensive disulfide bond cross-linking with abundant cysteine residues of hair keratins. The matrix proteins include the high-sulfur and high-glycine-tyrosine keratins. The protein is Keratin-associated protein 5-1 (KRTAP5-1) of Homo sapiens (Human).